The chain runs to 672 residues: tRNA 5-methylaminomethyl-2-thiouridine biosynthesis bifunctional protein MnmC (672 aa).

Residues 1–241 (MHKVQFADVH…KRECLQGVKA (241 aa)) form a tRNA (mnm(5)s(2)U34)-methyltransferase region. An FAD-dependent cmnm(5)s(2)U34 oxidoreductase region spans residues 269–672 (IGGGIASVFS…LLKGSQVKQG (404 aa)).

It in the N-terminal section; belongs to the methyltransferase superfamily. tRNA (mnm(5)s(2)U34)-methyltransferase family. In the C-terminal section; belongs to the DAO family. FAD is required as a cofactor.

It localises to the cytoplasm. The enzyme catalyses 5-aminomethyl-2-thiouridine(34) in tRNA + S-adenosyl-L-methionine = 5-methylaminomethyl-2-thiouridine(34) in tRNA + S-adenosyl-L-homocysteine + H(+). Catalyzes the last two steps in the biosynthesis of 5-methylaminomethyl-2-thiouridine (mnm(5)s(2)U) at the wobble position (U34) in tRNA. Catalyzes the FAD-dependent demodification of cmnm(5)s(2)U34 to nm(5)s(2)U34, followed by the transfer of a methyl group from S-adenosyl-L-methionine to nm(5)s(2)U34, to form mnm(5)s(2)U34. In Pasteurella multocida (strain Pm70), this protein is tRNA 5-methylaminomethyl-2-thiouridine biosynthesis bifunctional protein MnmC.